The chain runs to 475 residues: Splicing factor U2AF 65 kDa subunit (475 aa).

Residues 1–90 (MSDFDEFERQ…RHEKKKKVRK (90 aa)) are disordered. The residue at position 2 (serine 2) is an N-acetylserine. The residue at position 2 (serine 2) is a Phosphoserine. The required for interaction with PRPF19 stretch occupies residues 2-93 (SDFDEFERQL…KKKKVRKYWD (92 aa)). The segment covering 7–22 (FERQLNENKQERDKEN) has biased composition (basic and acidic residues). The residue at position 15 (lysine 15) is a 5-hydroxylysine; by JMJD6; alternate. Lysine 15 participates in a covalent cross-link: Glycyl lysine isopeptide (Lys-Gly) (interchain with G-Cter in SUMO2); alternate. Residues 17-47 (ERDKENRHRKRSHSRSRSRDRKRRSRSRDRR) are necessary and sufficient to stimulate pre-mRNAs 3'-end cleavage in a CFIm complex-dependent manner. The segment covering 23–46 (RHRKRSHSRSRSRDRKRRSRSRDR) has biased composition (basic residues). The span at 47–56 (RNRDQRSASR) shows a compositional bias: basic and acidic residues. Lysine 70 is covalently cross-linked (Glycyl lysine isopeptide (Lys-Gly) (interchain with G-Cter in SUMO2); alternate). Residue lysine 70 is modified to N6-acetyllysine; alternate. Serine 79 carries the phosphoserine modification. A compositionally biased stretch (basic residues) spans 79–89 (SPRHEKKKKVR). RRM domains follow at residues 149-231 (RRLY…RPHD), 259-337 (HKLF…RASV), and 385-466 (LPEE…YCDP). Position 276 is a 5-hydroxylysine; by JMJD6 (lysine 276). Serine 294 is modified (phosphoserine).

It belongs to the splicing factor SR family. As to quaternary structure, interacts with U2AF1L4. Heterodimer with U2AF1. Binds unphosphorylated SF1. Interacts with SCAF11 and SNW1. Interacts with ZRSR2/U2AF1-RS2. Interacts with RBM17. Interacts with PRPF19; the interaction is direct. Interacts with POLR2A (via the C-terminal domain); recruits PRPF19 and the Prp19 complex to the pre-mRNA. Interacts with KHDC4 (Isoform 2). Interacts with ZRSR2. Interacts with the SF3B complex composed of SF3B1, SF3B2, SF3B3, SF3B4, SF3B5, SF3B6 and PHF5A. Interacts (via N-terminus) with CPSF7 (via C-terminus); this interaction stimulates pre-mRNA 3'-end processing by promoting the recruitment of the CFIm complex to cleavage and polyadenylation signals. Interacts with ARGLU1; interaction may be involved in ARGLU1-mediated modulation of alternative splicing. In terms of processing, lysyl-hydroxylation at Lys-15 and Lys-276 affects the mRNA splicing activity of the protein, leading to regulate some, but not all, alternative splicing events.

It localises to the nucleus. In terms of biological role, plays a role in pre-mRNA splicing and 3'-end processing. By recruiting PRPF19 and the PRP19C/Prp19 complex/NTC/Nineteen complex to the RNA polymerase II C-terminal domain (CTD), and thereby pre-mRNA, may couple transcription to splicing. Induces cardiac troponin-T (TNNT2) pre-mRNA exon inclusion in muscle. Regulates the TNNT2 exon 5 inclusion through competition with MBNL1. Binds preferentially to a single-stranded structure within the polypyrimidine tract of TNNT2 intron 4 during spliceosome assembly. Required for the export of mRNA out of the nucleus, even if the mRNA is encoded by an intron-less gene. Represses the splicing of MAPT/Tau exon 10. Positively regulates pre-mRNA 3'-end processing by recruiting the CFIm complex to cleavage and polyadenylation signals. The polypeptide is Splicing factor U2AF 65 kDa subunit (U2AF2) (Homo sapiens (Human)).